A 315-amino-acid chain; its full sequence is Methionyl-tRNA formyltransferase (315 aa).

A (6S)-5,6,7,8-tetrahydrofolate-binding site is contributed by 113–116; that stretch reads SLLP.

Belongs to the Fmt family.

The catalysed reaction is L-methionyl-tRNA(fMet) + (6R)-10-formyltetrahydrofolate = N-formyl-L-methionyl-tRNA(fMet) + (6S)-5,6,7,8-tetrahydrofolate + H(+). Its function is as follows. Attaches a formyl group to the free amino group of methionyl-tRNA(fMet). The formyl group appears to play a dual role in the initiator identity of N-formylmethionyl-tRNA by promoting its recognition by IF2 and preventing the misappropriation of this tRNA by the elongation apparatus. The sequence is that of Methionyl-tRNA formyltransferase from Escherichia fergusonii (strain ATCC 35469 / DSM 13698 / CCUG 18766 / IAM 14443 / JCM 21226 / LMG 7866 / NBRC 102419 / NCTC 12128 / CDC 0568-73).